We begin with the raw amino-acid sequence, 373 residues long: 3-dehydroquinate synthase (373 aa).

NAD(+) is bound by residues 67–72 (EGEETK), 101–105 (GVILD), 125–126 (TT), K138, and K147. Zn(2+) contacts are provided by E180, H240, and H256.

The protein belongs to the sugar phosphate cyclases superfamily. Dehydroquinate synthase family. The cofactor is NAD(+). It depends on Co(2+) as a cofactor. Zn(2+) is required as a cofactor.

Its subcellular location is the cytoplasm. The catalysed reaction is 7-phospho-2-dehydro-3-deoxy-D-arabino-heptonate = 3-dehydroquinate + phosphate. Its pathway is metabolic intermediate biosynthesis; chorismate biosynthesis; chorismate from D-erythrose 4-phosphate and phosphoenolpyruvate: step 2/7. Its function is as follows. Catalyzes the conversion of 3-deoxy-D-arabino-heptulosonate 7-phosphate (DAHP) to dehydroquinate (DHQ). In Chlamydia trachomatis serovar L2 (strain ATCC VR-902B / DSM 19102 / 434/Bu), this protein is 3-dehydroquinate synthase.